Reading from the N-terminus, the 242-residue chain is Adenosine 5'-phosphosulfate reductase (242 aa).

Positions 125, 126, 208, and 211 each coordinate [4Fe-4S] cluster. Catalysis depends on C234, which acts as the Nucleophile; cysteine thiosulfonate intermediate.

It belongs to the PAPS reductase family. CysH subfamily. The cofactor is [4Fe-4S] cluster.

It localises to the cytoplasm. The enzyme catalyses [thioredoxin]-disulfide + sulfite + AMP + 2 H(+) = adenosine 5'-phosphosulfate + [thioredoxin]-dithiol. Its pathway is sulfur metabolism; hydrogen sulfide biosynthesis; sulfite from sulfate. Catalyzes the formation of sulfite from adenosine 5'-phosphosulfate (APS) using thioredoxin as an electron donor. The protein is Adenosine 5'-phosphosulfate reductase of Staphylococcus saprophyticus subsp. saprophyticus (strain ATCC 15305 / DSM 20229 / NCIMB 8711 / NCTC 7292 / S-41).